A 93-amino-acid chain; its full sequence is Small ribosomal subunit protein bS18 (93 aa).

Belongs to the bacterial ribosomal protein bS18 family. Part of the 30S ribosomal subunit. Forms a tight heterodimer with protein bS6.

In terms of biological role, binds as a heterodimer with protein bS6 to the central domain of the 16S rRNA, where it helps stabilize the platform of the 30S subunit. This is Small ribosomal subunit protein bS18 from Paracidovorax citrulli (strain AAC00-1) (Acidovorax citrulli).